A 497-amino-acid polypeptide reads, in one-letter code: MPSVKLTHHSPPDTIASDSVRLLSRETLRISASLASPPVDDLPPHSPPPPDSQFLHSTLRLICCEEIDGRRFKYVAESDGSGRFKKNSVRAISLESPQTPFDEVGSFLRSYVVPEGFPGSVNESYVPYMTWRALKHFFGGAMGVFTTQTLLNSVGASRNSSASAAVAINWILKDGAGRVGKMLFARQGKKFDYDLKQLRFAGDLLMELGAGVELATAAVPHLFLPLACAANVVKNVAAVTSTSTRTPIYKAFAKGENIGDVTAKGECVGNIADLMGTGFSILISKRNPSLVTTFGLLSCGYLMSSYQEVRSVVLHTLNRARFTVAVESFLKTGRVPSLQEGNIQEKIFTFPWVDDRPVMLGARFKDAFQDPSTYMAVKPFFDKERYMVTYSPTKGKVYALLKHQANSDDILKAAFHAHVLLHFMNQSKDGNPRSVEQLDPAFAPTEYELESRIAESCEMVSTSYGVFKSRAAEQGWRMSESLLNPGRARLCHVKEGE.

The protein belongs to the RUS1 family.

Functionally, required for normal embryo development. This chain is Protein root UVB sensitive 6, found in Arabidopsis thaliana (Mouse-ear cress).